The following is a 504-amino-acid chain: Maturase K (504 aa).

The protein belongs to the intron maturase 2 family. MatK subfamily.

Its subcellular location is the plastid. It localises to the chloroplast. Functionally, usually encoded in the trnK tRNA gene intron. Probably assists in splicing its own and other chloroplast group II introns. The sequence is that of Maturase K from Hamamelis mollis (Chinese witch hazel).